We begin with the raw amino-acid sequence, 163 residues long: Cyclic pyranopterin monophosphate synthase (163 aa).

Substrate contacts are provided by residues 79 to 81 (LCH) and 117 to 118 (ME). Asp132 is a catalytic residue.

This sequence belongs to the MoaC family. As to quaternary structure, homohexamer; trimer of dimers.

The catalysed reaction is (8S)-3',8-cyclo-7,8-dihydroguanosine 5'-triphosphate = cyclic pyranopterin phosphate + diphosphate. It functions in the pathway cofactor biosynthesis; molybdopterin biosynthesis. In terms of biological role, catalyzes the conversion of (8S)-3',8-cyclo-7,8-dihydroguanosine 5'-triphosphate to cyclic pyranopterin monophosphate (cPMP). This is Cyclic pyranopterin monophosphate synthase from Chloroflexus aurantiacus (strain ATCC 29366 / DSM 635 / J-10-fl).